Consider the following 299-residue polypeptide: UPF0282 protein TK1681 (299 aa).

Belongs to the UPF0282 family.

This chain is UPF0282 protein TK1681, found in Thermococcus kodakarensis (strain ATCC BAA-918 / JCM 12380 / KOD1) (Pyrococcus kodakaraensis (strain KOD1)).